Consider the following 424-residue polypeptide: UPF0229 protein PFL_5654 (424 aa).

A disordered region spans residues 85 to 108; it reads GEHIARPQGGGGGGGGRGKAGNSG. A compositionally biased stretch (gly residues) spans 92–108; sequence QGGGGGGGGRGKAGNSG.

It belongs to the UPF0229 family.

This chain is UPF0229 protein PFL_5654, found in Pseudomonas fluorescens (strain ATCC BAA-477 / NRRL B-23932 / Pf-5).